A 476-amino-acid polypeptide reads, in one-letter code: Bifunctional protein HldE (476 aa).

The tract at residues 1–318 is ribokinase; it reads MAQYSAEFKQ…ENAIHARPET (318 aa). 195–198 is an ATP binding site; that stretch reads NMSE. Asp264 is an active-site residue. The interval 344 to 476 is cytidylyltransferase; that stretch reads MTNGCFDILH…VIEKIKLLKD (133 aa).

In the N-terminal section; belongs to the carbohydrate kinase PfkB family. The protein in the C-terminal section; belongs to the cytidylyltransferase family. As to quaternary structure, homodimer.

The enzyme catalyses D-glycero-beta-D-manno-heptose 7-phosphate + ATP = D-glycero-beta-D-manno-heptose 1,7-bisphosphate + ADP + H(+). It carries out the reaction D-glycero-beta-D-manno-heptose 1-phosphate + ATP + H(+) = ADP-D-glycero-beta-D-manno-heptose + diphosphate. It participates in nucleotide-sugar biosynthesis; ADP-L-glycero-beta-D-manno-heptose biosynthesis; ADP-L-glycero-beta-D-manno-heptose from D-glycero-beta-D-manno-heptose 7-phosphate: step 1/4. The protein operates within nucleotide-sugar biosynthesis; ADP-L-glycero-beta-D-manno-heptose biosynthesis; ADP-L-glycero-beta-D-manno-heptose from D-glycero-beta-D-manno-heptose 7-phosphate: step 3/4. Functionally, catalyzes the phosphorylation of D-glycero-D-manno-heptose 7-phosphate at the C-1 position to selectively form D-glycero-beta-D-manno-heptose-1,7-bisphosphate. In terms of biological role, catalyzes the ADP transfer from ATP to D-glycero-beta-D-manno-heptose 1-phosphate, yielding ADP-D-glycero-beta-D-manno-heptose. This is Bifunctional protein HldE from Haemophilus influenzae (strain PittGG).